The primary structure comprises 138 residues: Small ribosomal subunit protein uS11c (138 aa).

Belongs to the universal ribosomal protein uS11 family. As to quaternary structure, part of the 30S ribosomal subunit.

It is found in the plastid. The protein resides in the chloroplast. The polypeptide is Small ribosomal subunit protein uS11c (Illicium oligandrum (Star anise)).